The primary structure comprises 476 residues: Siroheme synthase (476 aa).

The interval 1–204 (MDYFPVFLNI…GKDQAAQDYL (204 aa)) is precorrin-2 dehydrogenase /sirohydrochlorin ferrochelatase. Residues 22–23 (SV) and 43–44 (PT) contribute to the NAD(+) site. Position 129 is a phosphoserine (Ser129). A uroporphyrinogen-III C-methyltransferase region spans residues 218-476 (GEVYLVGAGP…GNTPGYSKHP (259 aa)). Position 227 (Pro227) interacts with S-adenosyl-L-methionine. Asp250 functions as the Proton acceptor in the catalytic mechanism. Lys272 serves as the catalytic Proton donor. S-adenosyl-L-methionine is bound by residues 303–305 (GGD), Ile308, 333–334 (TA), Met385, and Gly414.

The protein in the N-terminal section; belongs to the precorrin-2 dehydrogenase / sirohydrochlorin ferrochelatase family. In the C-terminal section; belongs to the precorrin methyltransferase family.

The enzyme catalyses uroporphyrinogen III + 2 S-adenosyl-L-methionine = precorrin-2 + 2 S-adenosyl-L-homocysteine + H(+). The catalysed reaction is precorrin-2 + NAD(+) = sirohydrochlorin + NADH + 2 H(+). It carries out the reaction siroheme + 2 H(+) = sirohydrochlorin + Fe(2+). Its pathway is cofactor biosynthesis; adenosylcobalamin biosynthesis; precorrin-2 from uroporphyrinogen III: step 1/1. It participates in cofactor biosynthesis; adenosylcobalamin biosynthesis; sirohydrochlorin from precorrin-2: step 1/1. The protein operates within porphyrin-containing compound metabolism; siroheme biosynthesis; precorrin-2 from uroporphyrinogen III: step 1/1. It functions in the pathway porphyrin-containing compound metabolism; siroheme biosynthesis; siroheme from sirohydrochlorin: step 1/1. Its pathway is porphyrin-containing compound metabolism; siroheme biosynthesis; sirohydrochlorin from precorrin-2: step 1/1. Functionally, multifunctional enzyme that catalyzes the SAM-dependent methylations of uroporphyrinogen III at position C-2 and C-7 to form precorrin-2 via precorrin-1. Then it catalyzes the NAD-dependent ring dehydrogenation of precorrin-2 to yield sirohydrochlorin. Finally, it catalyzes the ferrochelation of sirohydrochlorin to yield siroheme. The protein is Siroheme synthase of Nitrosomonas eutropha (strain DSM 101675 / C91 / Nm57).